Here is a 206-residue protein sequence, read N- to C-terminus: 3-isopropylmalate dehydratase small subunit (206 aa).

It belongs to the LeuD family. LeuD type 1 subfamily. As to quaternary structure, heterodimer of LeuC and LeuD.

It catalyses the reaction (2R,3S)-3-isopropylmalate = (2S)-2-isopropylmalate. It functions in the pathway amino-acid biosynthesis; L-leucine biosynthesis; L-leucine from 3-methyl-2-oxobutanoate: step 2/4. In terms of biological role, catalyzes the isomerization between 2-isopropylmalate and 3-isopropylmalate, via the formation of 2-isopropylmaleate. This Acidobacterium capsulatum (strain ATCC 51196 / DSM 11244 / BCRC 80197 / JCM 7670 / NBRC 15755 / NCIMB 13165 / 161) protein is 3-isopropylmalate dehydratase small subunit.